A 64-amino-acid chain; its full sequence is Beta-defensin 2 (64 aa).

An N-terminal signal peptide occupies residues 1–22 (MRLHHLLLVLFFVVLSAGSGFT). 3 disulfide bridges follow: cysteine 31/cysteine 60, cysteine 38/cysteine 53, and cysteine 43/cysteine 61.

The protein belongs to the beta-defensin family.

The protein localises to the secreted. In terms of biological role, has bactericidal activity. This is Beta-defensin 2 (DEFB2) from Ovis aries (Sheep).